We begin with the raw amino-acid sequence, 354 residues long: Galactose-1-phosphate uridylyltransferase (354 aa).

The interval 36 to 72 (TVTTSEVRRDPLLGDSAPSRLAPQGRTYHPPADQCPL) is disordered. Zn(2+) is bound by residues cysteine 70, cysteine 73, and histidine 114. Position 154 (asparagine 154) interacts with UDP-alpha-D-glucose. Histidine 165 contributes to the Zn(2+) binding site. Histidine 167 functions as the Tele-UMP-histidine intermediate in the catalytic mechanism. Residues glutamine 169 and glutamine 332 each coordinate UDP-alpha-D-glucose.

It belongs to the galactose-1-phosphate uridylyltransferase type 1 family. It depends on Zn(2+) as a cofactor.

The enzyme catalyses alpha-D-galactose 1-phosphate + UDP-alpha-D-glucose = alpha-D-glucose 1-phosphate + UDP-alpha-D-galactose. Its pathway is carbohydrate metabolism; galactose metabolism. The chain is Galactose-1-phosphate uridylyltransferase (galT) from Streptomyces lividans.